We begin with the raw amino-acid sequence, 750 residues long: uncharacterized protein (750 aa).

This is an uncharacterized protein from Escherichia coli (strain K12).